The chain runs to 1889 residues: Protein TIC 214 (1889 aa).

The next 6 membrane-spanning stretches (helical) occupy residues 11-31, 67-87, 88-108, 127-147, 175-195, and 224-244; these read LISL…YYGF, FIAG…HLAL, GKPH…FFWN, LSIQ…HFIL, VGWL…LVWI, and IFSI…PSPI. Residues 255–265 are compositionally biased toward acidic residues; that stretch reads PEEVGESEEER. Disordered regions lie at residues 255–303 and 1610–1633; these read PEEV…PSKE and SNQE…KKKQ. Over residues 279–293 the composition is skewed to polar residues; it reads NQKQGTEENTSSSLF.

Belongs to the TIC214 family. In terms of assembly, part of the Tic complex.

The protein resides in the plastid. The protein localises to the chloroplast inner membrane. In terms of biological role, involved in protein precursor import into chloroplasts. May be part of an intermediate translocation complex acting as a protein-conducting channel at the inner envelope. The protein is Protein TIC 214 of Gossypium barbadense (Sea Island cotton).